Here is a 140-residue protein sequence, read N- to C-terminus: Ubiquitin-like protein ATG12 (140 aa).

The tract at residues 1 to 52 is disordered; the sequence is MAEEPQTVLQLPPSSAAGGEGLTDVSPETTTPEPPSSAAVSPGTEEPAGDTK. A compositionally biased stretch (low complexity) spans 25–42; it reads VSPETTTPEPPSSAAVSP. Residue Gly-140 forms a Glycyl lysine isopeptide (Gly-Lys) (interchain with K-? in acceptor protein) linkage.

It belongs to the ATG12 family. As to quaternary structure, forms a conjugate with ATG5. Part of the minor complex composed of 4 sets of ATG12-ATG5 and ATG16L1 (400 kDa); this complex interacts with ATG3 leading to disruption of ATG7 interaction and promotion of ATG8-like proteins lipidation. Forms an 800-kDa complex composed of ATG12-ATG5 and ATG16L2. Interacts with DHX58/RIG-1, IFIH1/MDA5 and MAVS/IPS-1 in monomeric form as well as in ATG12-ATG5 conjugate. The interaction with MAVS is further enhanced upon vesicular stomatitis virus (VSV) infection. Interacts with ATG3; this interaction is essential for phosphatidylethanolamine (PE)-conjugated ATG8-like proteins formation. Interacts with ATG7. Interacts with ATG10. Interacts with TECPR1. Interacts with SH3BGRL. The ATG12-ATG5 conjugate interacts with PDCD6IP (via the BRO1 domain); this interaction is bridged by ATG12 and promotes multiple PDCD6IP-mediated functions such as endolysosomal trafficking, macroautophagy and exosome biogenesis. Post-translationally, acetylated by EP300.

The protein localises to the cytoplasm. The protein resides in the preautophagosomal structure membrane. In terms of biological role, ubiquitin-like protein involved in autophagy vesicles formation. Conjugation with ATG5 through a ubiquitin-like conjugating system involving also ATG7 as an E1-like activating enzyme and ATG10 as an E2-like conjugating enzyme, is essential for its function. The ATG12-ATG5 conjugate acts as an E3-like enzyme which is required for lipidation of ATG8 family proteins and their association to the vesicle membranes. The ATG12-ATG5 conjugate also negatively regulates the innate antiviral immune response by blocking the type I IFN production pathway through direct association with RARRES3 and MAVS. Also plays a role in translation or delivery of incoming viral RNA to the translation apparatus. As part of the ATG8 conjugation system with ATG5 and ATG16L1, required for recruitment of LRRK2 to stressed lysosomes and induction of LRRK2 kinase activity in response to lysosomal stress. This Pongo abelii (Sumatran orangutan) protein is Ubiquitin-like protein ATG12.